A 348-amino-acid chain; its full sequence is Ion-translocating oxidoreductase complex subunit D (348 aa).

Helical transmembrane passes span 20–39 (LMKW…TYFF), 72–91 (ALRD…AIPP), and 120–140 (PFNP…VQMT). Position 187 is an FMN phosphoryl threonine (Thr-187). The next 5 membrane-spanning stretches (helical) occupy residues 214-234 (LAGV…LVLI), 241-261 (WHIP…FLMF), 266-286 (TASP…FFIA), 300-320 (LVFG…GGFP), and 321-341 (DGVA…DYYT).

It belongs to the NqrB/RnfD family. The complex is composed of six subunits: RnfA, RnfB, RnfC, RnfD, RnfE and RnfG. FMN is required as a cofactor.

Its subcellular location is the cell inner membrane. Its function is as follows. Part of a membrane-bound complex that couples electron transfer with translocation of ions across the membrane. The chain is Ion-translocating oxidoreductase complex subunit D from Vibrio atlanticus (strain LGP32) (Vibrio splendidus (strain Mel32)).